Consider the following 240-residue polypeptide: Large ribosomal subunit protein bL25 (240 aa).

The disordered stretch occupies residues 1–23 (MATVKELKATARPKAGKGAARAE). Residues 10-19 (TARPKAGKGA) are compositionally biased toward low complexity.

The protein belongs to the bacterial ribosomal protein bL25 family. CTC subfamily. In terms of assembly, part of the 50S ribosomal subunit; part of the 5S rRNA/L5/L18/L25 subcomplex. Contacts the 5S rRNA. Binds to the 5S rRNA independently of L5 and L18.

Functionally, this is one of the proteins that binds to the 5S RNA in the ribosome where it forms part of the central protuberance. The polypeptide is Large ribosomal subunit protein bL25 (Afipia carboxidovorans (strain ATCC 49405 / DSM 1227 / KCTC 32145 / OM5) (Oligotropha carboxidovorans)).